A 527-amino-acid polypeptide reads, in one-letter code: Butyrophilin subfamily 2 member A1 (527 aa).

The N-terminal stretch at 1 to 28 (MESAAALHFSRPASLLLLLLSLCALVSA) is a signal peptide. The 113-residue stretch at 29–141 (QFIVVGPTDP…SYDEAILHLV (113 aa)) folds into the Ig-like V-type domain. The Extracellular segment spans residues 29 to 248 (QFIVVGPTDP…SFMPSVSPCA (220 aa)). Asn-46, Asn-114, and Asn-120 each carry an N-linked (GlcNAc...) asparagine glycan. Residues Cys-51 and Cys-125 are joined by a disulfide bond. Residues 249-269 (VALPIIVVILMIPIAVCIYWI) form a helical membrane-spanning segment. Residues 270–527 (NKLQKEKKIL…LHRVGTHQSL (258 aa)) lie on the Cytoplasmic side of the membrane. One can recognise a B30.2/SPRY domain in the interval 310–506 (VKEKLQEELR…IFICPALTGA (197 aa)).

The protein belongs to the immunoglobulin superfamily. BTN/MOG family. In terms of tissue distribution, highly expressed in brain, bone marrow, small intestine, muscle, spleen and pancreas. Moderate expression was seen in lung, liver and kidney.

It is found in the membrane. In Homo sapiens (Human), this protein is Butyrophilin subfamily 2 member A1 (BTN2A1).